Here is a 229-residue protein sequence, read N- to C-terminus: UPF0488 protein C8orf33 homolog (229 aa).

At Ala-2 the chain carries N-acetylalanine. Arg-27 carries the post-translational modification Omega-N-methylarginine. The interval 55-101 (SRAHPLGDEGGTASKKQNKKKKTRNRASVANGGEKASEKLAPEEVPL) is disordered. The span at 70 to 79 (KQNKKKKTRN) shows a compositional bias: basic residues. Residue Ser-82 is modified to Phosphoserine.

This sequence belongs to the UPF0488 family.

This chain is UPF0488 protein C8orf33 homolog, found in Pongo abelii (Sumatran orangutan).